A 360-amino-acid chain; its full sequence is DNA replication and repair protein RecF (360 aa).

Residue 30–37 (GRNAQGKT) coordinates ATP.

It belongs to the RecF family.

The protein resides in the cytoplasm. The RecF protein is involved in DNA metabolism; it is required for DNA replication and normal SOS inducibility. RecF binds preferentially to single-stranded, linear DNA. It also seems to bind ATP. This is DNA replication and repair protein RecF from Desulforudis audaxviator (strain MP104C).